The primary structure comprises 1239 residues: Codanin-1 (1239 aa).

An N-acetylalanine modification is found at Ala-2. A compositionally biased stretch (polar residues) spans 61–72; that stretch reads SRVLPQGPSTPA. Disordered regions lie at residues 61 to 249 and 261 to 299; these read SRVL…PPGC and KARTKQLQQSPTPASPIPESGSPVPSRTGNLTAEPADPA. Thr-70 carries the post-translational modification Phosphothreonine. Composition is skewed to low complexity over residues 77–88, 95–116, and 138–179; these read ASAALPARQGAP, ARSQLFPAAEPLSAAAEAPLAR, and GAAE…LSNL. Residues 193–213 form an interaction with ASF1A/B region; the sequence is AGRTKPSRRINPTPVSEERSL. The segment covering 219 to 238 has biased composition (polar residues); that stretch reads CFTSPPISCVPSSQPSTLDT. A Phosphoserine modification is found at Ser-270. A run of 2 helical transmembrane segments spans residues 317 to 337 and 631 to 651; these read CIAENLVPNLFLELFFVLQLL and FAVVLLSLRLLAKFLGFVAFL.

In terms of assembly, interacts with ASF1A and ASF1B. Found in a cytosolic complex with ASF1A, ASF1B, IPO4 and histones H3.1 and H4. Widely expressed in adult mice, the highest levels can be measured in erythropoietic cells.

The protein localises to the cytoplasm. The protein resides in the nucleus. It is found in the membrane. In terms of biological role, may act as a negative regulator of ASF1 in chromatin assembly. This Mus musculus (Mouse) protein is Codanin-1 (Cdan1).